The chain runs to 1227 residues: MMDNDDALLNNGGPQSGAETVYGTEDNNMVMSEKNEQVVSIVQQLAGSIYQEFERMINRYDEDVVKNLMPLLVNVLECLDASYRINQEQDVEVELLREDNEQLVTQYEREKSARKQSEQKLLEAEDLAEQENKELATRLESVESIVRMLELKHKNSLEHASRLEEREADLKKEYNKLHERYTELFKNHVDYMERTKMLMGSTHSQMSTASERMDVSRARLNPVARSSGPVSYGFASLENSVMLDTETICSVGSQSDDSGPPSLQNELDNLSGTLERGAATDALQQQHHATSPQSPDSSPVVPNVPTNVGRSTTKKEQRSDNNLYQELSFQDNEESEENEIVTGSWVHPGEYASSANDNYFGMGKEVENLIMENNELLATKNALNIVKDDLIVKVDELTGEVEIVREELNAMQQSRTKLRQRISELEDELKKAKEQVKQQNTEQEENDVPLAQRKRFTRVEMAMVLMERNQYKERLMELQEAVRLTEILRASRTVDNLDRKSKQSIWKYFSNLFTPSNRPTERVADGLGGGPMFRHTGGGSPAHSHGSPSRGSGGGDNRLALTSGQPPVHPASAGLANALIMPKDYAEEGSSERISARRREQYRQLRAHVQKEDGRLHAYGWSLPINKASQEANPNRHSGGVPVPVYCNPLAEASPHMKVFCAAGVNLHGGFTKNGQSLIPANSPYAPKSTLKIAEITSPTADQSMEALDRQMARVSLETLEPETQLSSFVWICTSTHAASTVSVVDANQSATVLDAFPICASHLLCIASVQGAMESDYALLEQSEVVKAGEMLQRPGEGTELLGKVEFVRVKPKSDDEQNSNEKQQQEEEEAKEATEKSNEQLPAVSAEEPLGNVEAIKIRQPLPGAPQRLSTDGNQTNNNNNSSSSSNLLFATKSLNPILETKDRDEPAMSSVGPTMWLGAQDGWLYVHSSVGRWHECLHRVLLPDAVLAIVHVEARVVVALANAQLAVFRRQTDGQWDLNSYHLVTLGDRNHSIRCLCVAGERIWAAHRNKIFIVDPVSLNIVHSLDAHPRKESQVRQMAATGAGVWVSIRLDSTLRLYNTHTFEHKQDVDIEPYVSKMLGTGKLGFSFVRITALMVSCNRLWIGTSNGVIISVPLAEVQPKSSSDPHGQMPLCCMANAQLSFHGHRDAVKFFVSVPMLQQPNLNGGLTFTNKRPDMLVMCGGEGYIDFRINDNDMENSIQLEPNQTIENRGDKSYLIVWHVSQR.

A disordered region spans residues 1-22; that stretch reads MMDNDDALLNNGGPQSGAETVY. Residues 25–113 enclose the RH1 domain; that stretch reads EDNNMVMSEK…VTQYEREKSA (89 aa). Positions 84–191 form a coiled coil; the sequence is RINQEQDVEV…TELFKNHVDY (108 aa). The tract at residues 281–323 is disordered; it reads DALQQQHHATSPQSPDSSPVVPNVPTNVGRSTTKKEQRSDNNL. Positions 290-308 are enriched in low complexity; sequence TSPQSPDSSPVVPNVPTNV. The stretch at 363–489 forms a coiled coil; sequence GKEVENLIME…EAVRLTEILR (127 aa). Residues 453–524 enclose the RH2 domain; sequence RKRFTRVEMA…PSNRPTERVA (72 aa). Disordered regions lie at residues 517 to 572, 804 to 851, and 863 to 889; these read NRPT…HPAS, GKVE…AEEP, and PLPG…SSSN. Over residues 526–540 the composition is skewed to gly residues; that stretch reads GLGGGPMFRHTGGGS. Positions 541 to 550 are enriched in low complexity; that stretch reads PAHSHGSPSR. The segment covering 807–817 has biased composition (basic and acidic residues); it reads EFVRVKPKSDD. Residues 814–849 are a coiled coil; it reads KSDDEQNSNEKQQQEEEEAKEATEKSNEQLPAVSAE. The span at 879 to 889 shows a compositional bias: low complexity; the sequence is NNNNNSSSSSN.

The protein belongs to the JIP scaffold family. As to quaternary structure, forms homo- and heterooligomeric complexes. Binds the TPR motif-containing C-terminal of kinesin light chain, Klc. Pre-assembled syd scaffolding complexes are then transported as a cargo of kinesin, to the required subcellular location.

It is found in the cytoplasm. Functionally, the JNK-interacting protein (JIP) group of scaffold proteins selectively mediates JNK-signaling by aggregating specific components of the MAPK cascade to form a functional JNK signaling module. May function as a regulator of vesicle transport, through interactions with the JNK-signaling components and motor proteins. Syd is required for efficient kinesin-I mediated axonal transport. The sequence is that of JNK-interacting protein 3 (syd) from Drosophila melanogaster (Fruit fly).